We begin with the raw amino-acid sequence, 126 residues long: Arginine decarboxylase proenzyme (126 aa).

Ser-74 functions as the Schiff-base intermediate with substrate; via pyruvic acid in the catalytic mechanism. Ser-74 carries the pyruvic acid (Ser); by autocatalysis modification. His-79 functions as the Proton acceptor; for processing activity in the catalytic mechanism. Cys-94 serves as the catalytic Proton donor; for catalytic activity.

The protein belongs to the prokaryotic AdoMetDC family. Type 1 subfamily. Heterooctamer of four alpha and four beta chains arranged as a tetramer of alpha/beta heterodimers. Pyruvate serves as cofactor. In terms of processing, is synthesized initially as an inactive proenzyme. Formation of the active enzyme involves a self-maturation process in which the active site pyruvoyl group is generated from an internal serine residue via an autocatalytic post-translational modification. Two non-identical subunits are generated from the proenzyme in this reaction, and the pyruvate is formed at the N-terminus of the alpha chain, which is derived from the carboxyl end of the proenzyme. The post-translation cleavage follows an unusual pathway, termed non-hydrolytic serinolysis, in which the side chain hydroxyl group of the serine supplies its oxygen atom to form the C-terminus of the beta chain, while the remainder of the serine residue undergoes an oxidative deamination to produce ammonia and the pyruvoyl group blocking the N-terminus of the alpha chain.

The catalysed reaction is L-arginine + H(+) = agmatine + CO2. Its pathway is amine and polyamine biosynthesis; agmatine biosynthesis; agmatine from L-arginine: step 1/1. Specifically catalyzes the decarboxylation of L-arginine to agmatine. Has no S-adenosylmethionine decarboxylase (AdoMetDC) activity. The chain is Arginine decarboxylase proenzyme from Pyrobaculum calidifontis (strain DSM 21063 / JCM 11548 / VA1).